A 146-amino-acid chain; its full sequence is Multiple coagulation factor deficiency protein 2 (146 aa).

The first 26 residues, 1 to 26, serve as a signal peptide directing secretion; the sequence is MTMRSLLRTPFLCGLLWAFCAPGARA. An EF-hand 1 domain is found at 68 to 103; the sequence is SPQELQLHYFKMHDYDGNNLLDGLELSTAITHVHKE. Ca(2+) is bound by residues D81, D83, N85, and E92. S106 is subject to Phosphoserine. The region spanning 116-146 is the EF-hand 2 domain; the sequence is ELINIIDGVLRDDDKNNDGYIDYAEFAKSLQ. D129, N131, D133, Y135, and E140 together coordinate Ca(2+).

In terms of assembly, interacts in a calcium-dependent manner with LMAN1.

It is found in the endoplasmic reticulum-Golgi intermediate compartment. The protein resides in the endoplasmic reticulum. It localises to the golgi apparatus. Its function is as follows. The MCFD2-LMAN1 complex forms a specific cargo receptor for the ER-to-Golgi transport of selected proteins. Plays a role in the secretion of coagulation factors. This chain is Multiple coagulation factor deficiency protein 2 (MCFD2), found in Homo sapiens (Human).